A 213-amino-acid chain; its full sequence is UPF0329 protein ECU04_0110 (213 aa).

Belongs to the UPF0329 family.

This Encephalitozoon cuniculi (strain GB-M1) (Microsporidian parasite) protein is UPF0329 protein ECU04_0110.